Consider the following 843-residue polypeptide: Protein P (843 aa).

A terminal protein domain (TP) region spans residues 1–177; sequence MPLSYQHFRR…FCGSPYSWEQ (177 aa). The interval 178-346 is spacer; the sequence is ELQHGSTSLN…YCLSHIINLL (169 aa). Disordered regions lie at residues 180 to 202 and 226 to 315; these read QHGS…AQSS and QHKQ…VGSE. The span at 239-249 shows a compositional bias: basic residues; that stretch reads RSGRLRSRVHT. 2 stretches are compositionally biased toward polar residues: residues 262-277 and 287-299; these read TGHS…SCFH and PSLS…TSTG. The polymerase/reverse transcriptase domain (RT) stretch occupies residues 347–690; it reads EDWGPCYEHG…YMNLYPVARQ (344 aa). The region spanning 357-600 is the Reverse transcriptase domain; the sequence is EHHIRTPKTP…YSLHFMGYII (244 aa). Mg(2+) contacts are provided by D429, D551, and D552.

This sequence belongs to the hepadnaviridae P protein family.

The catalysed reaction is DNA(n) + a 2'-deoxyribonucleoside 5'-triphosphate = DNA(n+1) + diphosphate. It catalyses the reaction Endonucleolytic cleavage to 5'-phosphomonoester.. Activated by host HSP70 and HSP40 in vitro to be able to bind the epsilon loop of the pgRNA. Because deletion of the RNase H region renders the protein partly chaperone-independent, the chaperones may be needed indirectly to relieve occlusion of the RNA-binding site by this domain. Inhibited by several reverse-transcriptase inhibitors: Lamivudine, Adefovir and Entecavir. Multifunctional enzyme that converts the viral RNA genome into dsDNA in viral cytoplasmic capsids. This enzyme displays a DNA polymerase activity that can copy either DNA or RNA templates, and a ribonuclease H (RNase H) activity that cleaves the RNA strand of RNA-DNA heteroduplexes in a partially processive 3'- to 5'-endonucleasic mode. Neo-synthesized pregenomic RNA (pgRNA) are encapsidated together with the P protein, and reverse-transcribed inside the nucleocapsid. Initiation of reverse-transcription occurs first by binding the epsilon loop on the pgRNA genome, and is initiated by protein priming, thereby the 5'-end of (-)DNA is covalently linked to P protein. Partial (+)DNA is synthesized from the (-)DNA template and generates the relaxed circular DNA (RC-DNA) genome. After budding and infection, the RC-DNA migrates in the nucleus, and is converted into a plasmid-like covalently closed circular DNA (cccDNA). The activity of P protein does not seem to be necessary for cccDNA generation, and is presumably released from (+)DNA by host nuclear DNA repair machinery. The polypeptide is Protein P (Hepatitis B virus genotype H (isolate United States/LAS2523/2002) (HBV-H)).